A 173-amino-acid polypeptide reads, in one-letter code: Shikimate kinase 1 (173 aa).

Residue 14 to 19 (GAGKST) coordinates ATP. Ser-18 lines the Mg(2+) pocket. Substrate is bound by residues Asp-36, Arg-60, and Gly-82. Residue Arg-120 participates in ATP binding. Arg-140 lines the substrate pocket. Position 157 (Gln-157) interacts with ATP.

The protein belongs to the shikimate kinase family. In terms of assembly, monomer. Requires Mg(2+) as cofactor.

Its subcellular location is the cytoplasm. It catalyses the reaction shikimate + ATP = 3-phosphoshikimate + ADP + H(+). Its pathway is metabolic intermediate biosynthesis; chorismate biosynthesis; chorismate from D-erythrose 4-phosphate and phosphoenolpyruvate: step 5/7. Its function is as follows. Catalyzes the specific phosphorylation of the 3-hydroxyl group of shikimic acid using ATP as a cosubstrate. The sequence is that of Shikimate kinase 1 from Erwinia tasmaniensis (strain DSM 17950 / CFBP 7177 / CIP 109463 / NCPPB 4357 / Et1/99).